A 232-amino-acid chain; its full sequence is Phosphatidylserine decarboxylase proenzyme (232 aa).

Ser-190 (schiff-base intermediate with substrate; via pyruvic acid) is an active-site residue. Ser-190 carries the pyruvic acid (Ser); by autocatalysis modification.

Belongs to the phosphatidylserine decarboxylase family. PSD-A subfamily. In terms of assembly, heterodimer of a large membrane-associated beta subunit and a small pyruvoyl-containing alpha subunit. It depends on pyruvate as a cofactor. Post-translationally, is synthesized initially as an inactive proenzyme. Formation of the active enzyme involves a self-maturation process in which the active site pyruvoyl group is generated from an internal serine residue via an autocatalytic post-translational modification. Two non-identical subunits are generated from the proenzyme in this reaction, and the pyruvate is formed at the N-terminus of the alpha chain, which is derived from the carboxyl end of the proenzyme. The post-translation cleavage follows an unusual pathway, termed non-hydrolytic serinolysis, in which the side chain hydroxyl group of the serine supplies its oxygen atom to form the C-terminus of the beta chain, while the remainder of the serine residue undergoes an oxidative deamination to produce ammonia and the pyruvoyl prosthetic group on the alpha chain.

It localises to the cell membrane. It carries out the reaction a 1,2-diacyl-sn-glycero-3-phospho-L-serine + H(+) = a 1,2-diacyl-sn-glycero-3-phosphoethanolamine + CO2. The protein operates within phospholipid metabolism; phosphatidylethanolamine biosynthesis; phosphatidylethanolamine from CDP-diacylglycerol: step 2/2. In terms of biological role, catalyzes the formation of phosphatidylethanolamine (PtdEtn) from phosphatidylserine (PtdSer). In Mesorhizobium japonicum (strain LMG 29417 / CECT 9101 / MAFF 303099) (Mesorhizobium loti (strain MAFF 303099)), this protein is Phosphatidylserine decarboxylase proenzyme.